The sequence spans 44 residues: Photosystem I reaction center subunit IX (44 aa).

Residues 7 to 27 (YLSVAPVLATLWFGSLAGLLI) form a helical membrane-spanning segment.

Belongs to the PsaJ family.

It localises to the plastid. It is found in the chloroplast thylakoid membrane. Functionally, may help in the organization of the PsaE and PsaF subunits. This is Photosystem I reaction center subunit IX from Illicium oligandrum (Star anise).